The sequence spans 199 residues: Altered inheritance of mitochondria protein 11 (199 aa).

The next 2 membrane-spanning stretches (helical) occupy residues 79-101 and 129-151; these read MALF…RGVI and VFHS…LWYY.

It belongs to the AIM11 family.

The protein resides in the membrane. This Komagataella phaffii (strain GS115 / ATCC 20864) (Yeast) protein is Altered inheritance of mitochondria protein 11 (AIM11).